The chain runs to 434 residues: Eukaryotic translation initiation factor 3 subunit E-1 (434 aa).

Residues 219 to 392 (FFNHPKGRDL…GHVVMGTQPL (174 aa)) enclose the PCI domain.

It belongs to the eIF-3 subunit E family. In terms of assembly, component of the eukaryotic translation initiation factor 3 (eIF-3) complex. The eIF-3 complex interacts with pix. Interacts with mxt.

Its subcellular location is the cytoplasm. Functionally, component of the eukaryotic translation initiation factor 3 (eIF-3) complex, which is involved in protein synthesis of a specialized repertoire of mRNAs and, together with other initiation factors, stimulates binding of mRNA and methionyl-tRNAi to the 40S ribosome. The eIF-3 complex specifically targets and initiates translation of a subset of mRNAs involved in cell proliferation. This chain is Eukaryotic translation initiation factor 3 subunit E-1 (eIF3-S6-1), found in Drosophila willistoni (Fruit fly).